The chain runs to 316 residues: DNA-directed RNA polymerase subunit alpha (316 aa).

Residues 1-229 are alpha N-terminal domain (alpha-NTD); sequence MLEMEKPRID…EYLKLFTEID (229 aa). The alpha C-terminal domain (alpha-CTD) stretch occupies residues 246–316; that stretch reads KDKILEMSIE…LNLSFRKSED (71 aa).

It belongs to the RNA polymerase alpha chain family. Homodimer. The RNAP catalytic core consists of 2 alpha, 1 beta, 1 beta' and 1 omega subunit. When a sigma factor is associated with the core the holoenzyme is formed, which can initiate transcription.

It catalyses the reaction RNA(n) + a ribonucleoside 5'-triphosphate = RNA(n+1) + diphosphate. In terms of biological role, DNA-dependent RNA polymerase catalyzes the transcription of DNA into RNA using the four ribonucleoside triphosphates as substrates. This chain is DNA-directed RNA polymerase subunit alpha, found in Syntrophomonas wolfei subsp. wolfei (strain DSM 2245B / Goettingen).